The chain runs to 241 residues: uncharacterized protein (241 aa).

Transmembrane regions (helical) follow at residues methionine 1 to leucine 21, phenylalanine 43 to leucine 63, leucine 75 to isoleucine 95, isoleucine 108 to leucine 128, valine 160 to leucine 180, and isoleucine 200 to glycine 220.

To M.jannaschii MJ0871, MJ0880 and MJ1556.

Its subcellular location is the cell membrane. This is an uncharacterized protein from Methanocaldococcus jannaschii (strain ATCC 43067 / DSM 2661 / JAL-1 / JCM 10045 / NBRC 100440) (Methanococcus jannaschii).